The sequence spans 79 residues: D-alanyl carrier protein (79 aa).

The Carrier domain maps to 1-77; it reads MDVKAEVIEI…KIVEGVTELR (77 aa). An O-(pantetheine 4'-phosphoryl)serine modification is found at Ser35.

The protein belongs to the DltC family. Post-translationally, 4'-phosphopantetheine is transferred from CoA to a specific serine of apo-DCP.

It localises to the cytoplasm. Its pathway is cell wall biogenesis; lipoteichoic acid biosynthesis. Its function is as follows. Carrier protein involved in the D-alanylation of lipoteichoic acid (LTA). The loading of thioester-linked D-alanine onto DltC is catalyzed by D-alanine--D-alanyl carrier protein ligase DltA. The DltC-carried D-alanyl group is further transferred to cell membrane phosphatidylglycerol (PG) by forming an ester bond, probably catalyzed by DltD. D-alanylation of LTA plays an important role in modulating the properties of the cell wall in Gram-positive bacteria, influencing the net charge of the cell wall. This is D-alanyl carrier protein from Streptococcus thermophilus (strain CNRZ 1066).